A 391-amino-acid chain; its full sequence is Oxygen-dependent coproporphyrinogen-III oxidase, chloroplastic (391 aa).

The segment covering 1 to 13 has biased composition (polar residues); it reads MASSLLTTPSQTL. The segment at 1-34 is disordered; that stretch reads MASSLLTTPSQTLAPNPAAARARRSSPAAAQVSF. Residues 14–30 are compositionally biased toward low complexity; it reads APNPAAARARRSSPAAA. The important for dimerization stretch occupies residues 125–134; that stretch reads VLQDGNVFEK. S179 contributes to the substrate binding site. Residue H193 is the Proton donor of the active site. Residues 195-197 and 349-354 each bind substrate; these read NYR and GGRIES. Residues 331 to 366 form an important for dimerization region; it reads YVEFNLVYDRGTTFGLKTGGRIESILVSLPLTARWE.

It belongs to the aerobic coproporphyrinogen-III oxidase family. As to quaternary structure, homodimer.

It is found in the plastid. It localises to the chloroplast. It catalyses the reaction coproporphyrinogen III + O2 + 2 H(+) = protoporphyrinogen IX + 2 CO2 + 2 H2O. It participates in porphyrin-containing compound metabolism; protoporphyrin-IX biosynthesis; protoporphyrinogen-IX from coproporphyrinogen-III (O2 route): step 1/1. In terms of biological role, involved in the heme and chlorophyll biosynthesis. Catalyzes the aerobic oxidative decarboxylation of propionate groups of rings A and B of coproporphyrinogen-III to yield the vinyl groups in protoporphyrinogen-IX. The chain is Oxygen-dependent coproporphyrinogen-III oxidase, chloroplastic (CPX) from Hordeum vulgare (Barley).